Reading from the N-terminus, the 563-residue chain is Membrane protein insertase YidC (563 aa).

Residues 1–21 traverse the membrane as a helical segment; that stretch reads MDIKRTILIVALAIVTYVGVL. Residues 43-62 form a disordered region; it reads APGIPDTAAGTNGSASADVP. The next 5 helical transmembrane spans lie at 344-364, 370-390, 440-460, 471-491, and 518-538; these read LELT…FWLL, ILGN…GLFF, LGGC…YWVL, WILW…PIIM, and PIIF…YWVV.

Belongs to the OXA1/ALB3/YidC family. Type 1 subfamily. In terms of assembly, interacts with the Sec translocase complex via SecD. Specifically interacts with transmembrane segments of nascent integral membrane proteins during membrane integration.

It localises to the cell inner membrane. Its function is as follows. Required for the insertion and/or proper folding and/or complex formation of integral membrane proteins into the membrane. Involved in integration of membrane proteins that insert both dependently and independently of the Sec translocase complex, as well as at least some lipoproteins. Aids folding of multispanning membrane proteins. The polypeptide is Membrane protein insertase YidC (Pseudomonas savastanoi pv. phaseolicola (strain 1448A / Race 6) (Pseudomonas syringae pv. phaseolicola (strain 1448A / Race 6))).